The primary structure comprises 269 residues: Small ribosomal subunit protein uS2 (269 aa).

It belongs to the universal ribosomal protein uS2 family.

The chain is Small ribosomal subunit protein uS2 (rpsB) from Synechocystis sp. (strain ATCC 27184 / PCC 6803 / Kazusa).